The following is a 938-amino-acid chain: AP-2 complex subunit alpha-2 (938 aa).

Residues 11-12 (RG), lysine 43, tyrosine 53, and 57-61 (KYVCK) contribute to the a 1,2-diacyl-sn-glycero-3-phospho-(1D-myo-inositol-3,4,5-trisphosphate) site. Positions 616–677 (LKKKKGPSTV…APPVPAGPPP (62 aa)) are disordered. The segment covering 645–668 (PALASTSAVSTPSPSADLLGLGAA) has biased composition (low complexity).

Belongs to the adaptor complexes large subunit family. Adaptor protein complex 2 (AP-2) is a heterotetramer composed of two large adaptins (alpha-type subunit AP2A1 or AP2A2 and beta-type subunit AP2B1), a medium adaptin (mu-type subunit AP2M1) and a small adaptin (sigma-type subunit AP2S1). Binds clathrin. Binds EPN1, EPS15, AMPH, SNAP91 and BIN1. Interacts with HIP1. Interacts with DGKD. Interacts with DENND1A, DENND1B and DENND1C. Interacts with FCHO1. Interacts with ATAT1; this interaction is required for efficient alpha-tubulin acetylation by ATAT1. Interacts with KIAA1107. Together with AP2B1 and AP2M1, it interacts with ADAM10; this interaction facilitates ADAM10 endocytosis from the plasma membrane during long-term potentiation in hippocampal neurons. Interacts with CLN3 (via dileucine motif). Interacts with ABCB11; this interaction regulates cell membrane expression of ABCB11 through its internalization in a clathrin-dependent manner and its subsequent degradation. Interacts with DNAJC6.

The protein localises to the cell membrane. The protein resides in the membrane. It is found in the coated pit. Functionally, component of the adaptor protein complex 2 (AP-2). Adaptor protein complexes function in protein transport via transport vesicles in different membrane traffic pathways. Adaptor protein complexes are vesicle coat components and appear to be involved in cargo selection and vesicle formation. AP-2 is involved in clathrin-dependent endocytosis in which cargo proteins are incorporated into vesicles surrounded by clathrin (clathrin-coated vesicles, CCVs) which are destined for fusion with the early endosome. The clathrin lattice serves as a mechanical scaffold but is itself unable to bind directly to membrane components. Clathrin-associated adaptor protein (AP) complexes which can bind directly to both the clathrin lattice and to the lipid and protein components of membranes are considered to be the major clathrin adaptors contributing the CCV formation. AP-2 also serves as a cargo receptor to selectively sort the membrane proteins involved in receptor-mediated endocytosis. AP-2 seems to play a role in the recycling of synaptic vesicle membranes from the presynaptic surface. AP-2 recognizes Y-X-X-[FILMV] (Y-X-X-Phi) and [ED]-X-X-X-L-[LI] endocytosis signal motifs within the cytosolic tails of transmembrane cargo molecules. AP-2 may also play a role in maintaining normal post-endocytic trafficking through the ARF6-regulated, non-clathrin pathway. During long-term potentiation in hippocampal neurons, AP-2 is responsible for the endocytosis of ADAM10. The AP-2 alpha subunit binds polyphosphoinositide-containing lipids, positioning AP-2 on the membrane. The AP-2 alpha subunit acts via its C-terminal appendage domain as a scaffolding platform for endocytic accessory proteins. The AP-2 alpha and AP-2 sigma subunits are thought to contribute to the recognition of the [ED]-X-X-X-L-[LI] motif. In Bos taurus (Bovine), this protein is AP-2 complex subunit alpha-2.